The sequence spans 623 residues: uncharacterized protein (623 aa).

Polar residues predominate over residues Met-1–Asn-18. 7 disordered regions span residues Met-1–Thr-107, Leu-132–Ala-181, Ser-207–Asp-231, Arg-298–Gln-349, Arg-384–Val-464, Ser-533–Thr-553, and Val-568–Asp-623. The segment covering Ile-25–Asn-34 has biased composition (basic and acidic residues). A compositionally biased stretch (low complexity) spans Ser-39–Ser-49. The span at Leu-132–Gly-144 shows a compositional bias: polar residues. Low complexity predominate over residues Ser-165–Pro-177. Positions Glu-328–Pro-339 are enriched in polar residues. Over residues Gln-400–Pro-417 the composition is skewed to low complexity. Residues Ser-533–Ala-548 are compositionally biased toward polar residues. Residues Pro-604–Arg-614 show a composition bias toward low complexity.

This is an uncharacterized protein from Emericella nidulans (strain FGSC A4 / ATCC 38163 / CBS 112.46 / NRRL 194 / M139) (Aspergillus nidulans).